The sequence spans 98 residues: NADH-ubiquinone oxidoreductase chain 4L (98 aa).

The next 3 membrane-spanning stretches (helical) occupy residues 2–22 (PSISTNIILAFITALLGMLIF), 29–49 (SLLCLEGMMLSMFILSTLTIL), and 61–81 (ILLLVFAACEAAVGLALLVTV).

It belongs to the complex I subunit 4L family. Core subunit of respiratory chain NADH dehydrogenase (Complex I) which is composed of 45 different subunits.

The protein resides in the mitochondrion inner membrane. The catalysed reaction is a ubiquinone + NADH + 5 H(+)(in) = a ubiquinol + NAD(+) + 4 H(+)(out). In terms of biological role, core subunit of the mitochondrial membrane respiratory chain NADH dehydrogenase (Complex I) which catalyzes electron transfer from NADH through the respiratory chain, using ubiquinone as an electron acceptor. Part of the enzyme membrane arm which is embedded in the lipid bilayer and involved in proton translocation. The chain is NADH-ubiquinone oxidoreductase chain 4L (MT-ND4L) from Lemur catta (Ring-tailed lemur).